A 254-amino-acid polypeptide reads, in one-letter code: 5-oxoprolinase subunit A (254 aa).

The protein belongs to the LamB/PxpA family. As to quaternary structure, forms a complex composed of PxpA, PxpB and PxpC.

It carries out the reaction 5-oxo-L-proline + ATP + 2 H2O = L-glutamate + ADP + phosphate + H(+). Functionally, catalyzes the cleavage of 5-oxoproline to form L-glutamate coupled to the hydrolysis of ATP to ADP and inorganic phosphate. This Burkholderia thailandensis (strain ATCC 700388 / DSM 13276 / CCUG 48851 / CIP 106301 / E264) protein is 5-oxoprolinase subunit A.